The following is a 437-amino-acid chain: Serine carboxypeptidase-like 9 (437 aa).

A signal peptide spans 1–21; sequence MSLILKFMLLILLVSSHHVRS. Asn-101 carries an N-linked (GlcNAc...) asparagine glycan. Ser-175 is an active-site residue. Intrachain disulfides connect Cys-243–Cys-257 and Cys-281–Cys-293. N-linked (GlcNAc...) asparagine glycosylation is found at Asn-307 and Asn-346. Asp-362 is a catalytic residue. Residue Asn-378 is glycosylated (N-linked (GlcNAc...) asparagine). The active site involves His-415.

Belongs to the peptidase S10 family. Expressed in seedlings, leaves, flowers and siliques.

Its subcellular location is the secreted. It catalyses the reaction 2 1-O-(trans-sinapoyl)-beta-D-glucose = 1,2-di-O-sinapoyl beta-D-glucose + D-glucose. Catalyzes the formation of 1,2-bis-O-sinapoyl beta-D-glucoside and an unidentified compound 1. This is Serine carboxypeptidase-like 9 (SCPL9) from Arabidopsis thaliana (Mouse-ear cress).